A 302-amino-acid polypeptide reads, in one-letter code: tRNA pseudouridine synthase B (302 aa).

Asp-45 acts as the Nucleophile in catalysis.

It belongs to the pseudouridine synthase TruB family. Type 1 subfamily.

It catalyses the reaction uridine(55) in tRNA = pseudouridine(55) in tRNA. Responsible for synthesis of pseudouridine from uracil-55 in the psi GC loop of transfer RNAs. This chain is tRNA pseudouridine synthase B, found in Francisella tularensis subsp. novicida (strain U112).